A 98-amino-acid chain; its full sequence is Aspartyl/glutamyl-tRNA(Asn/Gln) amidotransferase subunit C (98 aa).

The protein belongs to the GatC family. As to quaternary structure, heterotrimer of A, B and C subunits.

It carries out the reaction L-glutamyl-tRNA(Gln) + L-glutamine + ATP + H2O = L-glutaminyl-tRNA(Gln) + L-glutamate + ADP + phosphate + H(+). The enzyme catalyses L-aspartyl-tRNA(Asn) + L-glutamine + ATP + H2O = L-asparaginyl-tRNA(Asn) + L-glutamate + ADP + phosphate + 2 H(+). Allows the formation of correctly charged Asn-tRNA(Asn) or Gln-tRNA(Gln) through the transamidation of misacylated Asp-tRNA(Asn) or Glu-tRNA(Gln) in organisms which lack either or both of asparaginyl-tRNA or glutaminyl-tRNA synthetases. The reaction takes place in the presence of glutamine and ATP through an activated phospho-Asp-tRNA(Asn) or phospho-Glu-tRNA(Gln). This Gloeothece citriformis (strain PCC 7424) (Cyanothece sp. (strain PCC 7424)) protein is Aspartyl/glutamyl-tRNA(Asn/Gln) amidotransferase subunit C.